The following is a 100-amino-acid chain: Replication restart protein PriB (100 aa).

An SSB domain is found at 1–100 (MTNRMELSGT…VLHADDIIHI (100 aa)).

This sequence belongs to the PriB family. In terms of assembly, homodimer. Interacts with PriA and DnaT. Component of the replication restart primosome. Primosome assembly occurs via a 'hand-off' mechanism. PriA binds to replication forks, subsequently PriB then DnaT bind; DnaT then displaces ssDNA to generate the helicase loading substrate.

Involved in the restart of stalled replication forks, which reloads the replicative helicase on sites other than the origin of replication; the PriA-PriB pathway is the major replication restart pathway. During primosome assembly it facilitates complex formation between PriA and DnaT on DNA; stabilizes PriA on DNA. Stimulates the DNA unwinding activity of PriA helicase. The chain is Replication restart protein PriB from Vibrio vulnificus (strain CMCP6).